The primary structure comprises 402 residues: Phosphomevalonate dehydratase large subunit (402 aa).

5 residues coordinate (R)-5-phosphomevalonate: G48, A49, S50, N79, and P80. C122 contacts [4Fe-4S] cluster. (R)-5-phosphomevalonate is bound by residues E145 and S146. C297 and C356 together coordinate [4Fe-4S] cluster. K377 provides a ligand contact to (R)-5-phosphomevalonate.

The protein belongs to the AcnX type II large subunit family. Heterodimer composed of a large subunit (PMDh-L) and a small subunit (PMDh-S). [4Fe-4S] cluster serves as cofactor.

The catalysed reaction is (R)-5-phosphomevalonate = (2E)-3-methyl-5-phosphooxypent-2-enoate + H2O. It functions in the pathway isoprenoid biosynthesis; isopentenyl diphosphate biosynthesis via mevalonate pathway. Its activity is regulated as follows. Neither the addition of 1 mM Mg(2+) nor 1 mM Mn(2+) has a significant effect on the activity, whereas Zn(2+) causes almost complete inactivation. Strongly inhibited by H(2)O(2), but not by EDTA or iodoacetamide. In terms of biological role, component of a hydro-lyase that catalyzes the dehydration of mevalonate 5-phosphate (MVA5P) to form trans-anhydromevalonate 5-phosphate (tAHMP). Involved in the archaeal mevalonate (MVA) pathway, which provides fundamental precursors for isoprenoid biosynthesis, such as isopentenyl diphosphate (IPP) and dimethylallyl diphosphate (DMAPP). This is Phosphomevalonate dehydratase large subunit from Aeropyrum pernix (strain ATCC 700893 / DSM 11879 / JCM 9820 / NBRC 100138 / K1).